We begin with the raw amino-acid sequence, 325 residues long: Beta-ketoacyl-[acyl-carrier-protein] synthase III (325 aa).

Catalysis depends on residues Cys119 and His252. The tract at residues 253 to 257 is ACP-binding; sequence QANIR. The active site involves Asn282.

The protein belongs to the thiolase-like superfamily. FabH family. In terms of assembly, homodimer.

The protein localises to the cytoplasm. The catalysed reaction is malonyl-[ACP] + acetyl-CoA + H(+) = 3-oxobutanoyl-[ACP] + CO2 + CoA. It functions in the pathway lipid metabolism; fatty acid biosynthesis. In terms of biological role, catalyzes the condensation reaction of fatty acid synthesis by the addition to an acyl acceptor of two carbons from malonyl-ACP. Catalyzes the first condensation reaction which initiates fatty acid synthesis and may therefore play a role in governing the total rate of fatty acid production. Possesses both acetoacetyl-ACP synthase and acetyl transacylase activities. Its substrate specificity determines the biosynthesis of branched-chain and/or straight-chain of fatty acids. This is Beta-ketoacyl-[acyl-carrier-protein] synthase III from Paracidovorax citrulli (strain AAC00-1) (Acidovorax citrulli).